We begin with the raw amino-acid sequence, 249 residues long: MAFEVDNDSFPGAIEGLKALKMRGTGVSMPNKQLACEYVDELTPAAKLVGAINTIVNDDGYLRGYNTDGTGHIRAIKESGFDIKGKTMVLLGAGGASTAIGAQGAIEGLKEIKLFNRRDEFFDKALAFAQRVNENTDCVVTDTDLADQQAFAEALASADILTNGTKVGMKPLENESLVNDISLLHPGLLVTECVYNPHMTKLLQQAQQAGCKTIDGYGMLLWQGAEQFTLWTGKDFPLEYVKQVMGFGA.

Lys32 and Asp68 together coordinate substrate. NAD(+)-binding positions include 93-96 (AGGA), 116-119 (NRRD), Lys166, 193-196 (CVYN), and Gly216.

It belongs to the shikimate dehydrogenase family. As to quaternary structure, homodimer.

The enzyme catalyses L-quinate + NAD(+) = 3-dehydroquinate + NADH + H(+). The catalysed reaction is L-quinate + NADP(+) = 3-dehydroquinate + NADPH + H(+). It carries out the reaction shikimate + NADP(+) = 3-dehydroshikimate + NADPH + H(+). It catalyses the reaction shikimate + NAD(+) = 3-dehydroshikimate + NADH + H(+). The protein operates within metabolic intermediate biosynthesis; chorismate biosynthesis; chorismate from D-erythrose 4-phosphate and phosphoenolpyruvate: step 4/7. Functionally, the actual biological function of YdiB remains unclear, nor is it known whether 3-dehydroshikimate or quinate represents the natural substrate. Catalyzes the reversible NAD-dependent reduction of both 3-dehydroshikimate (DHSA) and 3-dehydroquinate to yield shikimate (SA) and quinate, respectively. It can use both NAD or NADP for catalysis, however it has higher catalytic efficiency with NAD. In Shigella flexneri serotype 5b (strain 8401), this protein is Quinate/shikimate dehydrogenase.